Consider the following 104-residue polypeptide: NADH-quinone oxidoreductase subunit K (104 aa).

The next 3 helical transmembrane spans lie at 4 to 24 (VPAS…LFGA), 31 to 51 (VIVL…FVAF), and 67 to 87 (LFTM…LIAL).

The protein belongs to the complex I subunit 4L family. As to quaternary structure, NDH-1 is composed of 14 different subunits. Subunits NuoA, H, J, K, L, M, N constitute the membrane sector of the complex.

It localises to the cell membrane. The enzyme catalyses a quinone + NADH + 5 H(+)(in) = a quinol + NAD(+) + 4 H(+)(out). In terms of biological role, NDH-1 shuttles electrons from NADH, via FMN and iron-sulfur (Fe-S) centers, to quinones in the respiratory chain. The immediate electron acceptor for the enzyme in this species is believed to be a menaquinone. Couples the redox reaction to proton translocation (for every two electrons transferred, four hydrogen ions are translocated across the cytoplasmic membrane), and thus conserves the redox energy in a proton gradient. This Bacillus anthracis (strain A0248) protein is NADH-quinone oxidoreductase subunit K.